A 333-amino-acid polypeptide reads, in one-letter code: Ketol-acid reductoisomerase (NAD(P)(+)) (333 aa).

Positions 2–182 (AKIYYDEDAS…GATRAGVIET (181 aa)) constitute a KARI N-terminal Rossmann domain. Residues 25–28 (YGSQ), Ser51, and 83–86 (DTVQ) contribute to the NADP(+) site. His108 is an active-site residue. Gly134 contributes to the NADP(+) binding site. In terms of domain architecture, KARI C-terminal knotted spans 183 to 327 (TFREETETDL…KELRQMMPWL (145 aa)). Mg(2+) is bound by residues Asp191, Glu195, Glu227, and Glu231. Position 252 (Ser252) interacts with substrate.

It belongs to the ketol-acid reductoisomerase family. Mg(2+) is required as a cofactor.

The catalysed reaction is (2R)-2,3-dihydroxy-3-methylbutanoate + NAD(+) = (2S)-2-acetolactate + NADH + H(+). It carries out the reaction (2R)-2,3-dihydroxy-3-methylbutanoate + NADP(+) = (2S)-2-acetolactate + NADPH + H(+). The protein operates within amino-acid biosynthesis; L-isoleucine biosynthesis; L-isoleucine from 2-oxobutanoate: step 2/4. Its pathway is amino-acid biosynthesis; L-valine biosynthesis; L-valine from pyruvate: step 2/4. Functionally, involved in the biosynthesis of branched-chain amino acids (BCAA). Catalyzes an alkyl-migration followed by a ketol-acid reduction of (S)-2-acetolactate (S2AL) to yield (R)-2,3-dihydroxy-isovalerate. In the isomerase reaction, S2AL is rearranged via a Mg-dependent methyl migration to produce 3-hydroxy-3-methyl-2-ketobutyrate (HMKB). In the reductase reaction, this 2-ketoacid undergoes a metal-dependent reduction by NADPH or NADH to yield (R)-2,3-dihydroxy-isovalerate. This chain is Ketol-acid reductoisomerase (NAD(P)(+)), found in Hydrogenobaculum sp. (strain Y04AAS1).